We begin with the raw amino-acid sequence, 372 residues long: DNA-directed RNA polymerase subunit alpha (372 aa).

Residues 1–268 (MIFDEDSNSI…DQFQPFINFD (268 aa)) form an alpha N-terminal domain (alpha-NTD) region. Residues 280-372 (KDTLPYDSNL…ESLSKQYSEE (93 aa)) are alpha C-terminal domain (alpha-CTD).

This sequence belongs to the RNA polymerase alpha chain family. Homodimer. The RNAP catalytic core consists of 2 alpha, 1 beta, 1 beta' and 1 omega subunit. When a sigma factor is associated with the core the holoenzyme is formed, which can initiate transcription.

The enzyme catalyses RNA(n) + a ribonucleoside 5'-triphosphate = RNA(n+1) + diphosphate. In terms of biological role, DNA-dependent RNA polymerase catalyzes the transcription of DNA into RNA using the four ribonucleoside triphosphates as substrates. The protein is DNA-directed RNA polymerase subunit alpha of Ehrlichia chaffeensis (strain ATCC CRL-10679 / Arkansas).